A 130-amino-acid chain; its full sequence is MVQRLTLRRRLSYNTKSNKRRVVRTPGGRLVYLYVKKQRTVPKCGQCKEKLSGIKPSRPSERPRMCRRLKTVTRTFGGVLCHRCLRERIIRAFLIDEQKVVKVLKAQQLGKPVSKPPKIQKTAKAASKSK.

Residues 111–130 (KPVSKPPKIQKTAKAASKSK) form a disordered region.

This sequence belongs to the eukaryotic ribosomal protein eL34 family.

The chain is Large ribosomal subunit protein eL34 (RpL34) from Aedes albopictus (Asian tiger mosquito).